A 160-amino-acid polypeptide reads, in one-letter code: UPF0225 protein PputW619_1140 (160 aa).

It belongs to the UPF0225 family.

This chain is UPF0225 protein PputW619_1140, found in Pseudomonas putida (strain W619).